The primary structure comprises 463 residues: Fumarate hydratase class II (463 aa).

Substrate-binding positions include Ser98–Thr100, His129–Asp132, Ser139–Asn141, and Thr187. Residue His188 is the Proton donor/acceptor of the active site. Ser318 is a catalytic residue. Substrate-binding positions include Ser319 and Lys324–Asn326.

It belongs to the class-II fumarase/aspartase family. Fumarase subfamily. In terms of assembly, homotetramer.

The protein localises to the cytoplasm. It catalyses the reaction (S)-malate = fumarate + H2O. Its pathway is carbohydrate metabolism; tricarboxylic acid cycle; (S)-malate from fumarate: step 1/1. Involved in the TCA cycle. Catalyzes the stereospecific interconversion of fumarate to L-malate. The chain is Fumarate hydratase class II from Rickettsia bellii (strain RML369-C).